A 156-amino-acid chain; its full sequence is Ribosomal RNA large subunit methyltransferase H (156 aa).

S-adenosyl-L-methionine is bound by residues Leu-73, Gly-104, and 123-128 (LSAMTL).

Belongs to the RNA methyltransferase RlmH family. As to quaternary structure, homodimer.

It localises to the cytoplasm. The enzyme catalyses pseudouridine(1915) in 23S rRNA + S-adenosyl-L-methionine = N(3)-methylpseudouridine(1915) in 23S rRNA + S-adenosyl-L-homocysteine + H(+). Its function is as follows. Specifically methylates the pseudouridine at position 1915 (m3Psi1915) in 23S rRNA. This is Ribosomal RNA large subunit methyltransferase H from Laribacter hongkongensis (strain HLHK9).